The following is a 142-amino-acid chain: Large ribosomal subunit protein uL16 (142 aa).

This sequence belongs to the universal ribosomal protein uL16 family. In terms of assembly, part of the 50S ribosomal subunit.

In terms of biological role, binds 23S rRNA and is also seen to make contacts with the A and possibly P site tRNAs. This chain is Large ribosomal subunit protein uL16, found in Phenylobacterium zucineum (strain HLK1).